Consider the following 669-residue polypeptide: GTP-binding protein 1 (669 aa).

The segment at 1 to 32 is disordered; it reads MAAERSRSPVDSPVPASMFAPEPSSPGAARAA. Phosphoserine occurs at positions 6, 8, 12, 24, 25, 44, 47, and 69. Residues 158–389 enclose the tr-type G domain; the sequence is FLEVRVAVVG…LNLLSPRTSY (232 aa). The tract at residues 167 to 174 is G1; the sequence is GNVDAGKS. 167-174 lines the GTP pocket; that stretch reads GNVDAGKS. The tract at residues 206–210 is G2; that stretch reads GRTSS. Residues 252–255 form a G3 region; the sequence is DLAG. Residues 252–256 and 308–311 contribute to the GTP site; these read DLAGH and TKID. The tract at residues 308 to 311 is G4; it reads TKID. A G5 region spans residues 366–368; the sequence is SNV. Composition is skewed to polar residues over residues 573 to 595 and 620 to 637; these read LLQT…QSTK and DEAS…SGLQ. A disordered region spans residues 573 to 669; that stretch reads LLQTTNNSPM…GACVTPASGC (97 aa). A Phosphoserine modification is found at Ser-580. The span at 646-657 shows a compositional bias: basic residues; that stretch reads GRRRGGQRHKVK.

It belongs to the TRAFAC class translation factor GTPase superfamily. Classic translation factor GTPase family. GTPBP1 subfamily. In terms of assembly, interacts with EXOSC2/RRP4, EXOSC3/RRP40, EXOSC5/RRP46, HNRNPD, HNRNPR and SYNCRIP. Identified in a complex with HNRNPD, HNRNPL, HNRNPQ, HNRNPR, HNRNPU and AANAT mRNA, but does not bind mRNA by itself. As to expression, detected in pineal gland (at protein level).

It localises to the cytoplasm. Functionally, promotes degradation of target mRNA species. Plays a role in the regulation of circadian mRNA stability. Binds GTP and has GTPase activity. The polypeptide is GTP-binding protein 1 (Gtpbp1) (Rattus norvegicus (Rat)).